Reading from the N-terminus, the 282-residue chain is Succinate dehydrogenase [ubiquinone] iron-sulfur subunit, mitochondrial (282 aa).

Residues 1-21 constitute a mitochondrion transit peptide; the sequence is MLRGSTSVCRSLELVTQAARY. The 2Fe-2S ferredoxin-type domain maps to 39–129; the sequence is EIYRFNPEEP…TTKIYPLPHM (91 aa). The [2Fe-2S] cluster site is built by Cys89, Cys94, Cys97, and Cys109. The 4Fe-4S ferredoxin-type domain occupies 172 to 202; that stretch reads EQEKLDGLYECILCACCSASCPSYWWNADKY. The [4Fe-4S] cluster site is built by Cys182, Cys185, and Cys188. [3Fe-4S] cluster is bound at residue Cys192. Trp197 lines the a rhodoquinol pocket. Residue Trp197 participates in a ubiquinone binding. Cys239 and Cys245 together coordinate [3Fe-4S] cluster. Cys249 contributes to the [4Fe-4S] cluster binding site.

Belongs to the succinate dehydrogenase/fumarate reductase iron-sulfur protein family. In terms of assembly, component of the mitochondrial electron transport chain complex II composed of four subunits: a flavoprotein (Fp), an iron-sulfur protein (Ip), and a large cytochrome b (CybL) subunit and a small cytochrome b (CybS) subunit. There are 2 developmental stage-specific forms of complex II which have the Ip and CybL subunits in common. Complex II from the free-living larvae (aerobic environment) acts as a succinate dehydrogenase and is composed of the common subunit Ip and CybL and the stage specific subunits FpL and CybSL. Complex II from parasitic larvae and adults (anaerobic environment) acts as a fumarate reductase and is composed of the common subunit Ip and CybL and the stage specific subunits FpA and CybSA. The cofactor is [2Fe-2S] cluster. [3Fe-4S] cluster serves as cofactor. It depends on [4Fe-4S] cluster as a cofactor. Expressed in adult muscles (at protein level).

The protein resides in the mitochondrion inner membrane. It carries out the reaction a ubiquinone + succinate = a ubiquinol + fumarate. The catalysed reaction is a rhodoquinone + succinate = a rhodoquinol + fumarate. Its pathway is carbohydrate metabolism; tricarboxylic acid cycle; fumarate from succinate (eukaryal route): step 1/1. Inhibited by the fungicide flutolanil. Functionally, iron-sulfur protein (Ip) subunit of the mitochondrial electron transport chain complex II which, together with the flavoprotein (Fp) subunit forms the catalytic core of the complex. During the free-living egg-larvae stages, which occur in an aerobic environment, complex II acts as a succinate dehydrogenase by transferring electrons from succinate to ubiquinone. During the parasitic larvae and adult stages, which occur in an anaerobic environment, complex II acts as a fumarate reductase by transferring electrons from rhodoquinol to fumarate. The protein is Succinate dehydrogenase [ubiquinone] iron-sulfur subunit, mitochondrial of Ascaris suum (Pig roundworm).